The sequence spans 122 residues: Large ribosomal subunit protein uL18 (122 aa).

It belongs to the universal ribosomal protein uL18 family. In terms of assembly, part of the 50S ribosomal subunit; part of the 5S rRNA/L5/L18/L25 subcomplex. Contacts the 5S and 23S rRNAs.

Functionally, this is one of the proteins that bind and probably mediate the attachment of the 5S RNA into the large ribosomal subunit, where it forms part of the central protuberance. In Desulfitobacterium hafniense (strain Y51), this protein is Large ribosomal subunit protein uL18.